Consider the following 439-residue polypeptide: MVMDKLGSSLQDALKKLVGAGRIDEKTVTEVVKDIQRALLQADVNVKLVMQMSSHIKERALKEEVPPGMNPREHVIKIVYQELISIVGRSADIPLKPQTIMMIGLQGSGKTTTTSKLSRYFQRKGLKPAVICADTFRPGAYQQLKTLCDKLNVPFYGEVGNPDAVGIVERGLAELGKNDVLIVDTAGRHSLEADLIDEMEQIHEIAQPDYKLLVLDGAIGQQASEQARAFNDSVGISGVVISKLDGTAKGGGALSAVSETNSAIAFIGVGETPDDLEKFEPDRFISRLLGMGDIKSLIEKAEETLSEEDIDMEAMMRGRFTLKDMYSQLEAMNKMGPMKQIMQMLPLGGMGAKLSDDAYKVTEDKMKGYRVLMDSMTEEELLNPRLLGSSRIKRISLGSGSSPDAVRELLKYYKMMQNAMKGLRGGKFNIQKMMKKMGM.

GTP contacts are provided by residues 104–111 (GLQGSGKT), 184–188 (DTAGR), and 242–245 (SKLD).

The protein belongs to the GTP-binding SRP family. SRP54 subfamily. As to quaternary structure, part of the signal recognition particle protein translocation system, which is composed of SRP and FtsY. Archaeal SRP consists of a 7S RNA molecule of 300 nucleotides and two protein subunits: SRP54 and SRP19.

It localises to the cytoplasm. The catalysed reaction is GTP + H2O = GDP + phosphate + H(+). Functionally, involved in targeting and insertion of nascent membrane proteins into the cytoplasmic membrane. Binds to the hydrophobic signal sequence of the ribosome-nascent chain (RNC) as it emerges from the ribosomes. The SRP-RNC complex is then targeted to the cytoplasmic membrane where it interacts with the SRP receptor FtsY. The polypeptide is Signal recognition particle 54 kDa protein (Methanococcoides burtonii (strain DSM 6242 / NBRC 107633 / OCM 468 / ACE-M)).